We begin with the raw amino-acid sequence, 312 residues long: Ribonuclease Z (312 aa).

His-62, His-64, Asp-66, His-67, His-144, Asp-215, and His-273 together coordinate Zn(2+). Asp-66 functions as the Proton acceptor in the catalytic mechanism.

It belongs to the RNase Z family. As to quaternary structure, homodimer. Zn(2+) is required as a cofactor.

It catalyses the reaction Endonucleolytic cleavage of RNA, removing extra 3' nucleotides from tRNA precursor, generating 3' termini of tRNAs. A 3'-hydroxy group is left at the tRNA terminus and a 5'-phosphoryl group is left at the trailer molecule.. Its function is as follows. Zinc phosphodiesterase, which displays some tRNA 3'-processing endonuclease activity. Probably involved in tRNA maturation, by removing a 3'-trailer from precursor tRNA. The chain is Ribonuclease Z from Prochlorococcus marinus (strain AS9601).